A 98-amino-acid chain; its full sequence is Protein translation factor SUI1 homolog (98 aa).

Belongs to the SUI1 family.

The protein is Protein translation factor SUI1 homolog of Thermococcus gammatolerans (strain DSM 15229 / JCM 11827 / EJ3).